The primary structure comprises 196 residues: tRNA(Phe) 7-((3-amino-3-carboxypropyl)-4-demethylwyosine(37)-N(4))-methyltransferase 1 (196 aa).

This sequence belongs to the TYW3 family.

It catalyses the reaction 4-demethyl-7-[(3S)-3-amino-3-carboxypropyl]wyosine(37) in tRNA(Phe) + S-adenosyl-L-methionine = 7-[(3S)-3-amino-3-carboxypropyl]wyosine(37) in tRNA(Phe) + S-adenosyl-L-homocysteine + H(+). In terms of biological role, S-adenosyl-L-methionine-dependent methyltransferase that acts as a component of the wyosine derivatives biosynthesis pathway. Probably methylates N-4 position of wybutosine-86 to produce wybutosine-72. This Pyrococcus furiosus (strain ATCC 43587 / DSM 3638 / JCM 8422 / Vc1) protein is tRNA(Phe) 7-((3-amino-3-carboxypropyl)-4-demethylwyosine(37)-N(4))-methyltransferase 1.